The primary structure comprises 424 residues: Serine--tRNA ligase (424 aa).

An L-serine-binding site is contributed by 233–235 (TAE). An ATP-binding site is contributed by 264–266 (RRE). E287 provides a ligand contact to L-serine. Residue 351 to 354 (EISS) participates in ATP binding. S387 serves as a coordination point for L-serine.

The protein belongs to the class-II aminoacyl-tRNA synthetase family. Type-1 seryl-tRNA synthetase subfamily. Homodimer. The tRNA molecule binds across the dimer.

It localises to the cytoplasm. The enzyme catalyses tRNA(Ser) + L-serine + ATP = L-seryl-tRNA(Ser) + AMP + diphosphate + H(+). The catalysed reaction is tRNA(Sec) + L-serine + ATP = L-seryl-tRNA(Sec) + AMP + diphosphate + H(+). The protein operates within aminoacyl-tRNA biosynthesis; selenocysteinyl-tRNA(Sec) biosynthesis; L-seryl-tRNA(Sec) from L-serine and tRNA(Sec): step 1/1. In terms of biological role, catalyzes the attachment of serine to tRNA(Ser). Is also able to aminoacylate tRNA(Sec) with serine, to form the misacylated tRNA L-seryl-tRNA(Sec), which will be further converted into selenocysteinyl-tRNA(Sec). The polypeptide is Serine--tRNA ligase (Cyanothece sp. (strain PCC 7425 / ATCC 29141)).